The primary structure comprises 404 residues: Cysteine desulfurase IscS (404 aa).

Residues 73–74, Asn153, Gln181, and 201–203 contribute to the pyridoxal 5'-phosphate site; these read AT and SAH. Lys204 bears the N6-(pyridoxal phosphate)lysine mark. Thr241 contacts pyridoxal 5'-phosphate. Cys327 acts as the Cysteine persulfide intermediate in catalysis. Cys327 contributes to the [2Fe-2S] cluster binding site.

This sequence belongs to the class-V pyridoxal-phosphate-dependent aminotransferase family. NifS/IscS subfamily. In terms of assembly, homodimer. Forms a heterotetramer with IscU, interacts with other sulfur acceptors. It depends on pyridoxal 5'-phosphate as a cofactor.

It is found in the cytoplasm. It carries out the reaction (sulfur carrier)-H + L-cysteine = (sulfur carrier)-SH + L-alanine. It functions in the pathway cofactor biosynthesis; iron-sulfur cluster biosynthesis. Functionally, master enzyme that delivers sulfur to a number of partners involved in Fe-S cluster assembly, tRNA modification or cofactor biosynthesis. Catalyzes the removal of elemental sulfur atoms from cysteine to produce alanine. Functions as a sulfur delivery protein for Fe-S cluster synthesis onto IscU, an Fe-S scaffold assembly protein, as well as other S acceptor proteins. In Anaeromyxobacter sp. (strain Fw109-5), this protein is Cysteine desulfurase IscS.